The following is a 106-amino-acid chain: Large ribosomal subunit protein uL24 (106 aa).

The protein belongs to the universal ribosomal protein uL24 family. As to quaternary structure, part of the 50S ribosomal subunit.

In terms of biological role, one of two assembly initiator proteins, it binds directly to the 5'-end of the 23S rRNA, where it nucleates assembly of the 50S subunit. One of the proteins that surrounds the polypeptide exit tunnel on the outside of the subunit. This chain is Large ribosomal subunit protein uL24, found in Desulforamulus reducens (strain ATCC BAA-1160 / DSM 100696 / MI-1) (Desulfotomaculum reducens).